The sequence spans 430 residues: Adenosylhomocysteinase (430 aa).

Residues T56, D131, and E156 each coordinate substrate. Position 157 to 159 (157 to 159 (TTT)) interacts with NAD(+). Positions 186 and 190 each coordinate substrate. Residues N191, 220-225 (GFGDVG), E243, N278, 299-301 (IGH), and N344 contribute to the NAD(+) site.

It belongs to the adenosylhomocysteinase family. It depends on NAD(+) as a cofactor.

It localises to the cytoplasm. The catalysed reaction is S-adenosyl-L-homocysteine + H2O = L-homocysteine + adenosine. It participates in amino-acid biosynthesis; L-homocysteine biosynthesis; L-homocysteine from S-adenosyl-L-homocysteine: step 1/1. Functionally, may play a key role in the regulation of the intracellular concentration of adenosylhomocysteine. This Halorhodospira halophila (strain DSM 244 / SL1) (Ectothiorhodospira halophila (strain DSM 244 / SL1)) protein is Adenosylhomocysteinase.